The chain runs to 671 residues: Probable ATP-dependent RNA helicase ddx41 (671 aa).

Coiled coils occupy residues 19-43 (IPLK…QPQQ) and 100-154 (LDQK…DMEE). 2 stretches are compositionally biased toward low complexity: residues 33–83 (LNNL…NNDN) and 125–139 (IEND…NNNG). 2 disordered regions span residues 33 to 88 (LNNL…FEDE) and 125 to 148 (IEND…KEEK). Positions 222–250 (TTFKEMKIPKPVIDVLLEKGIKKPSPIQV) match the Q motif motif. The region spanning 253 to 438 (LPVILSGRDM…RSALVLPVEV (186 aa)) is the Helicase ATP-binding domain. 266-273 (AYTGSGKT) contributes to the ATP binding site. The short motif at 386–389 (DEAD) is the DEAD box element. One can recognise a Helicase C-terminal domain in the interval 449–609 (NVTQEVEFVK…KVPPALLEIP (161 aa)). The interval 617–636 (KLQDRNGNTGGGADDDDTKP) is disordered. A CCHC-type zinc finger spans residues 635–652 (KPCEYCDGRGHRLVNCPK).

It belongs to the DEAD box helicase family. DDX41 subfamily.

It localises to the nucleus. It carries out the reaction ATP + H2O = ADP + phosphate + H(+). The sequence is that of Probable ATP-dependent RNA helicase ddx41 (ddx41) from Dictyostelium discoideum (Social amoeba).